Reading from the N-terminus, the 393-residue chain is Flap endonuclease 1 (393 aa).

An N-domain region spans residues 1-108 (MGILGLSKLL…SELQERRQRA (108 aa)). Residue aspartate 34 participates in Mg(2+) binding. Arginine 74 is a DNA binding site. Mg(2+) contacts are provided by aspartate 90, glutamate 162, glutamate 164, aspartate 183, and aspartate 185. The I-domain stretch occupies residues 126–257 (LMEKMSKRTV…QKAWEGIKKH (132 aa)). Glutamate 162 lines the DNA pocket. Glycine 235 and aspartate 237 together coordinate DNA. Aspartate 237 serves as a coordination point for Mg(2+). Residues 340–348 (TQGRLDQFF) form an interaction with PCNA region.

The protein belongs to the XPG/RAD2 endonuclease family. FEN1 subfamily. In terms of assembly, interacts with PCNA. Three molecules of FEN1 bind to one PCNA trimer with each molecule binding to one PCNA monomer. PCNA stimulates the nuclease activity without altering cleavage specificity. The cofactor is Mg(2+). In terms of processing, phosphorylated. Phosphorylation upon DNA damage induces relocalization to the nuclear plasma.

It is found in the nucleus. The protein localises to the nucleolus. Its subcellular location is the nucleoplasm. The protein resides in the mitochondrion. Structure-specific nuclease with 5'-flap endonuclease and 5'-3' exonuclease activities involved in DNA replication and repair. During DNA replication, cleaves the 5'-overhanging flap structure that is generated by displacement synthesis when DNA polymerase encounters the 5'-end of a downstream Okazaki fragment. It enters the flap from the 5'-end and then tracks to cleave the flap base, leaving a nick for ligation. Also involved in the long patch base excision repair (LP-BER) pathway, by cleaving within the apurinic/apyrimidinic (AP) site-terminated flap. Acts as a genome stabilization factor that prevents flaps from equilibrating into structures that lead to duplications and deletions. Also possesses 5'-3' exonuclease activity on nicked or gapped double-stranded DNA, and exhibits RNase H activity. Also involved in replication and repair of rDNA and in repairing mitochondrial DNA. This chain is Flap endonuclease 1, found in Trypanosoma cruzi (strain CL Brener).